A 238-amino-acid polypeptide reads, in one-letter code: MIYAGILAGGIGSRMGNVPLPKQFLDLDGKPILVHTVEKFLLTSEFDKIFIATPQKWISHTKDTLRKHHITDDRIEVVQGGSDRNETIMNIISAAEKENGISDDDVIITHDAVRPFLTRRIIKENIESVLKYGAVDTVITATDTIITSADGDSIQSIPVRSEMYQGQTPQSFNVNLLRNSYNDLSDEDKQIMTDACKILVVAGKQVKLVMGELYNIKITTPYDLKVANSIIKGGMLSD.

Residues 7 to 10 and 81 to 87 contribute to the CTP site; these read LAGG and GSDRNET.

Belongs to the IspD/TarI cytidylyltransferase family. TarI subfamily.

The catalysed reaction is D-ribitol 5-phosphate + CTP + H(+) = CDP-L-ribitol + diphosphate. Its pathway is cell wall biogenesis; poly(ribitol phosphate) teichoic acid biosynthesis. Functionally, catalyzes the transfer of the cytidylyl group of CTP to D-ribitol 5-phosphate. This is Ribitol-5-phosphate cytidylyltransferase from Staphylococcus saprophyticus subsp. saprophyticus (strain ATCC 15305 / DSM 20229 / NCIMB 8711 / NCTC 7292 / S-41).